The sequence spans 450 residues: UDP-N-acetylmuramoylalanine--D-glutamate ligase (450 aa).

115–121 (GTNGKTT) is a binding site for ATP.

It belongs to the MurCDEF family.

The protein localises to the cytoplasm. The enzyme catalyses UDP-N-acetyl-alpha-D-muramoyl-L-alanine + D-glutamate + ATP = UDP-N-acetyl-alpha-D-muramoyl-L-alanyl-D-glutamate + ADP + phosphate + H(+). Its pathway is cell wall biogenesis; peptidoglycan biosynthesis. Cell wall formation. Catalyzes the addition of glutamate to the nucleotide precursor UDP-N-acetylmuramoyl-L-alanine (UMA). The polypeptide is UDP-N-acetylmuramoylalanine--D-glutamate ligase (Desulfatibacillum aliphaticivorans).